The following is a 446-amino-acid chain: Argininosuccinate synthase (446 aa).

Residues 17–25 (AFSGGLDTS) and alanine 43 contribute to the ATP site. Residue tyrosine 99 participates in L-citrulline binding. Residues glycine 129 and threonine 131 each contribute to the ATP site. Residues threonine 131, asparagine 135, and aspartate 136 each coordinate L-aspartate. Asparagine 135 lines the L-citrulline pocket. Aspartate 136 provides a ligand contact to ATP. 2 residues coordinate L-citrulline: arginine 139 and serine 192. An ATP-binding site is contributed by aspartate 194. 3 residues coordinate L-citrulline: threonine 201, glutamate 203, and glutamate 280.

This sequence belongs to the argininosuccinate synthase family. Type 2 subfamily. In terms of assembly, homotetramer.

Its subcellular location is the cytoplasm. The enzyme catalyses L-citrulline + L-aspartate + ATP = 2-(N(omega)-L-arginino)succinate + AMP + diphosphate + H(+). It functions in the pathway amino-acid biosynthesis; L-arginine biosynthesis; L-arginine from L-ornithine and carbamoyl phosphate: step 2/3. The protein is Argininosuccinate synthase of Variovorax paradoxus (strain S110).